The chain runs to 297 residues: Putative lipid kinase MamU (297 aa).

Residues 43 to 131 (EGKDMGRMVR…MDVGRVNDRY (89 aa)) enclose the DAGKc domain. 68–74 (GDGSLSR) provides a ligand contact to ATP. The active-site Proton acceptor is glutamate 274.

It belongs to the diacylglycerol/lipid kinase family.

It localises to the cytoplasm. Might phosphorylate lipids. This Magnetospirillum gryphiswaldense (strain DSM 6361 / JCM 21280 / NBRC 15271 / MSR-1) protein is Putative lipid kinase MamU.